Here is an 86-residue protein sequence, read N- to C-terminus: Small ribosomal subunit protein bS20 (86 aa).

It belongs to the bacterial ribosomal protein bS20 family.

Functionally, binds directly to 16S ribosomal RNA. The sequence is that of Small ribosomal subunit protein bS20 from Mycolicibacterium gilvum (strain PYR-GCK) (Mycobacterium gilvum (strain PYR-GCK)).